Here is a 316-residue protein sequence, read N- to C-terminus: Apolipoprotein E (316 aa).

The signal sequence occupies residues 1 to 18; that stretch reads MKALWAVLVVTLLAGCLA. 8 repeat units span residues 76–97, 98–119, 120–141, 142–163, 164–185, 186–207, 208–229, and 230–251. The tract at residues 76-251 is 8 X 22 AA approximate tandem repeats; the sequence is VLMEDTMTEL…RLEEVREQME (176 aa). Methionine sulfoxide is present on methionine 139. Position 143 is a phosphoserine (serine 143). Residues 154-164 are LDL and other lipoprotein receptors binding; that stretch reads HLRKLRKRLMR. 158 to 161 is a heparin binding site; that stretch reads LRKR. The interval 206-286 is lipid-binding and lipoprotein association; that stretch reads TANLGAGAGK…GWFEPLVEDM (81 aa). 225–232 serves as a coordination point for heparin; it reads GARIRGRL. Residues 262–316 form a homooligomerization region; it reads QQMRLQAEIFQARLKGWFEPLVEDMQRQWANLVEKIQASVAANPIPPSSVPQESQ. Positions 274-286 are specificity for association with VLDL; the sequence is RLKGWFEPLVEDM.

It belongs to the apolipoprotein A1/A4/E family. In terms of assembly, homotetramer. May interact with ABCA1; functionally associated with ABCA1 in the biogenesis of HDLs. May interact with APP/A4 amyloid-beta peptide; the interaction is extremely stable in vitro but its physiological significance is unclear. May interact with MAPT. May interact with MAP2. In the cerebrospinal fluid, interacts with secreted SORL1. Interacts with PMEL; this allows the loading of PMEL luminal fragment on ILVs to induce fibril nucleation. APOE exists as multiple glycosylated and sialylated glycoforms within cells and in plasma. The extent of glycosylation and sialylation are tissue and context specific. In terms of processing, glycated in plasma VLDL. Post-translationally, phosphorylated by FAM20C in the extracellular medium.

It is found in the secreted. The protein resides in the extracellular space. It localises to the extracellular matrix. The protein localises to the extracellular vesicle. Its subcellular location is the endosome. It is found in the multivesicular body. In terms of biological role, APOE is an apolipoprotein, a protein associating with lipid particles, that mainly functions in lipoprotein-mediated lipid transport between organs via the plasma and interstitial fluids. APOE is a core component of plasma lipoproteins and is involved in their production, conversion and clearance. Apolipoproteins are amphipathic molecules that interact both with lipids of the lipoprotein particle core and the aqueous environment of the plasma. As such, APOE associates with chylomicrons, chylomicron remnants, very low density lipoproteins (VLDL) and intermediate density lipoproteins (IDL) but shows a preferential binding to high-density lipoproteins (HDL). It also binds a wide range of cellular receptors including the LDL receptor/LDLR, the LDL receptor-related proteins LRP1, LRP2 and LRP8 and the very low-density lipoprotein receptor/VLDLR that mediate the cellular uptake of the APOE-containing lipoprotein particles. Finally, APOE also has a heparin-binding activity and binds heparan-sulfate proteoglycans on the surface of cells, a property that supports the capture and the receptor-mediated uptake of APOE-containing lipoproteins by cells. A main function of APOE is to mediate lipoprotein clearance through the uptake of chylomicrons, VLDLs, and HDLs by hepatocytes. APOE is also involved in the biosynthesis by the liver of VLDLs as well as their uptake by peripheral tissues ensuring the delivery of triglycerides and energy storage in muscle, heart and adipose tissues. By participating in the lipoprotein-mediated distribution of lipids among tissues, APOE plays a critical role in plasma and tissues lipid homeostasis. APOE is also involved in two steps of reverse cholesterol transport, the HDLs-mediated transport of cholesterol from peripheral tissues to the liver, and thereby plays an important role in cholesterol homeostasis. First, it is functionally associated with ABCA1 in the biogenesis of HDLs in tissues. Second, it is enriched in circulating HDLs and mediates their uptake by hepatocytes. APOE also plays an important role in lipid transport in the central nervous system, regulating neuron survival and sprouting. The chain is Apolipoprotein E (Apoe) from Onychomys torridus (Southern grasshopper mouse).